An 810-amino-acid polypeptide reads, in one-letter code: Zinc finger transcription factor YRR1 (810 aa).

Positions M1–R47 are disordered. Residues F12–D22 are compositionally biased toward polar residues. Residues N23–S43 are compositionally biased toward low complexity. A DNA-binding region (zn(2)-C6 fungal-type) is located at residues C54–C82. The interval E722–R742 is disordered.

The protein resides in the cytoplasm. It localises to the nucleus. Transcription factor involved in the regulation of multidrug resistance genes. Acts in concert with YRR1. This Saccharomyces cerevisiae (strain ATCC 204508 / S288c) (Baker's yeast) protein is Zinc finger transcription factor YRR1 (YRR1).